The chain runs to 307 residues: Melanoma-associated antigen F1 (307 aa).

The interval 1 to 55 (MLQTPESRGLPVPQAEGEKDGGHDGETRAPTASQERPKEELGAGREEGAAEPALT) is disordered. Composition is skewed to basic and acidic residues over residues 16–27 (EGEKDGGHDGET) and 35–48 (ERPK…REEG). Positions 76–277 (LNRTVAELVQ…HWPVQYREAL (202 aa)) constitute an MAGE domain.

In terms of assembly, interacts (via MAGE domain) with RING-type zinc finger-containing E3 ubiquitin-protein ligases LNX1, TRIM27 and NSMCE1; the interaction is direct. Ubiquitous.

Its function is as follows. Enhances ubiquitin ligase activity of RING-type zinc finger-containing E3 ubiquitin ligases. Proposed to act through recruitment and/or stabilization of the E2 ubiquitin-conjugating enzyme at the E3:substrate complex. MAGEF1-NSMCE1 ubiquitin ligase complex promotes proteasomal degradation of MMS19, a key component of the cytosolic iron-sulfur protein assembly (CIA) machinery. Down-regulation of MMS19 impairs the activity of several DNA repair and metabolism enzymes such as ERCC2/XPD, FANCJ, RTEL1 and POLD1 that require iron-sulfur clusters as cofactors. May negatively regulate genome integrity by inhibiting homologous recombination-mediated double-strand break DNA repair. This chain is Melanoma-associated antigen F1, found in Homo sapiens (Human).